A 69-amino-acid polypeptide reads, in one-letter code: Protein transport protein Sec61 subunit gamma (69 aa).

At 1-40 (MDILEETAAPLKDFAKNSIRLFKKCTKPDAQEFQKIALAT) the chain is on the cytoplasmic side. The chain crosses the membrane as a helical span at residues 41 to 61 (LIGFAIMGFIGFFVKLIHIPI). Topologically, residues 62–69 (NNILVGGV) are extracellular.

Belongs to the SecE/SEC61-gamma family. In terms of assembly, heterotrimeric complex composed of SEC61-alpha, SEC61-beta and SEC61-gamma.

Its subcellular location is the endoplasmic reticulum membrane. Its function is as follows. Necessary for protein translocation in the endoplasmic reticulum. The sequence is that of Protein transport protein Sec61 subunit gamma (sec61g) from Dictyostelium discoideum (Social amoeba).